Here is a 79-residue protein sequence, read N- to C-terminus: Small ribosomal subunit protein uS17 (79 aa).

This sequence belongs to the universal ribosomal protein uS17 family. In terms of assembly, part of the 30S ribosomal subunit.

In terms of biological role, one of the primary rRNA binding proteins, it binds specifically to the 5'-end of 16S ribosomal RNA. The sequence is that of Small ribosomal subunit protein uS17 from Rhizobium johnstonii (strain DSM 114642 / LMG 32736 / 3841) (Rhizobium leguminosarum bv. viciae).